We begin with the raw amino-acid sequence, 537 residues long: Chaperonin GroEL 2 (537 aa).

Residues 29–32, 86–90, Gly-412, and Asp-495 each bind ATP; these read TLGP and DGTTT.

Belongs to the chaperonin (HSP60) family. In terms of assembly, forms a cylinder of 14 subunits composed of two heptameric rings stacked back-to-back. Interacts with the co-chaperonin GroES.

The protein localises to the cytoplasm. It catalyses the reaction ATP + H2O + a folded polypeptide = ADP + phosphate + an unfolded polypeptide.. Together with its co-chaperonin GroES, plays an essential role in assisting protein folding. The GroEL-GroES system forms a nano-cage that allows encapsulation of the non-native substrate proteins and provides a physical environment optimized to promote and accelerate protein folding. The protein is Chaperonin GroEL 2 of Paenarthrobacter aurescens (strain TC1).